The primary structure comprises 314 residues: Glutathione synthetase (314 aa).

The ATP-grasp domain maps to 125-311 (EKLAAQLFPQ…IAGQLFDAIE (187 aa)). Position 151–208 (151–208 (FVQKQEQAILKPLDGMGGHSIFRSSNGDPNLNVILETLTDGGRTLAIAQRYLQQIIEG)) interacts with ATP. Positions 282 and 284 each coordinate Mg(2+).

Belongs to the prokaryotic GSH synthase family. Mg(2+) is required as a cofactor. The cofactor is Mn(2+).

It catalyses the reaction gamma-L-glutamyl-L-cysteine + glycine + ATP = glutathione + ADP + phosphate + H(+). It functions in the pathway sulfur metabolism; glutathione biosynthesis; glutathione from L-cysteine and L-glutamate: step 2/2. In Xylella fastidiosa (strain 9a5c), this protein is Glutathione synthetase.